Reading from the N-terminus, the 476-residue chain is Ribulose bisphosphate carboxylase large chain (476 aa).

Positions 1-2 (MS) are excised as a propeptide. At Pro3 the chain carries N-acetylproline. Residue Lys14 is modified to N6,N6,N6-trimethyllysine. Positions 123 and 173 each coordinate substrate. Lys175 acts as the Proton acceptor in catalysis. Lys177 is a substrate binding site. Positions 201, 203, and 204 each coordinate Mg(2+). Lys201 carries the N6-carboxylysine modification. The active-site Proton acceptor is the His294. Substrate-binding residues include Arg295, His327, and Ser379.

Belongs to the RuBisCO large chain family. Type I subfamily. In terms of assembly, heterohexadecamer of 8 large chains and 8 small chains; disulfide-linked. The disulfide link is formed within the large subunit homodimers. Requires Mg(2+) as cofactor. Post-translationally, the disulfide bond which can form in the large chain dimeric partners within the hexadecamer appears to be associated with oxidative stress and protein turnover.

The protein resides in the plastid. It localises to the chloroplast. It catalyses the reaction 2 (2R)-3-phosphoglycerate + 2 H(+) = D-ribulose 1,5-bisphosphate + CO2 + H2O. The catalysed reaction is D-ribulose 1,5-bisphosphate + O2 = 2-phosphoglycolate + (2R)-3-phosphoglycerate + 2 H(+). In terms of biological role, ruBisCO catalyzes two reactions: the carboxylation of D-ribulose 1,5-bisphosphate, the primary event in carbon dioxide fixation, as well as the oxidative fragmentation of the pentose substrate in the photorespiration process. Both reactions occur simultaneously and in competition at the same active site. The polypeptide is Ribulose bisphosphate carboxylase large chain (Sorghum bicolor (Sorghum)).